The sequence spans 359 residues: 3-dehydroquinate synthase (359 aa).

Residues 71 to 76 (DGEAYK), 105 to 109 (GVIGD), 129 to 130 (TT), Lys142, and Lys151 contribute to the NAD(+) site. 3 residues coordinate Zn(2+): Glu184, His247, and His264.

The protein belongs to the sugar phosphate cyclases superfamily. Dehydroquinate synthase family. It depends on Co(2+) as a cofactor. Zn(2+) is required as a cofactor. The cofactor is NAD(+).

The protein resides in the cytoplasm. The catalysed reaction is 7-phospho-2-dehydro-3-deoxy-D-arabino-heptonate = 3-dehydroquinate + phosphate. It participates in metabolic intermediate biosynthesis; chorismate biosynthesis; chorismate from D-erythrose 4-phosphate and phosphoenolpyruvate: step 2/7. Functionally, catalyzes the conversion of 3-deoxy-D-arabino-heptulosonate 7-phosphate (DAHP) to dehydroquinate (DHQ). This Burkholderia mallei (strain NCTC 10247) protein is 3-dehydroquinate synthase.